The primary structure comprises 213 residues: ER lumen protein-retaining receptor erd-2.2 (213 aa).

Topologically, residues 1 to 2 are lumenal; sequence MN. Residues 3-21 traverse the membrane as a helical segment; the sequence is IFRISADMSHLLAIIILLL. Topologically, residues 22–35 are cytoplasmic; that stretch reads KIWKSRSCSGISAR. The chain crosses the membrane as a helical span at residues 36–53; sequence SQILFALVFTARYLDLFS. Residues 54–61 are Lumenal-facing; the sequence is TYISLYNT. Residues 62-80 form a helical membrane-spanning segment; sequence TMKITFLAATYATVYLMFF. Topologically, residues 81-96 are cytoplasmic; that stretch reads KFRSTYMRESDTFRVE. Residues 97-110 form a helical membrane-spanning segment; sequence LLIVPAAILALLIN. Residues 111 to 117 are Lumenal-facing; it reads HDFAPFE. A helical transmembrane segment spans residues 118 to 137; sequence LLWTFSIYLEAVAILPQLFL. Residues 138-149 lie on the Cytoplasmic side of the membrane; it reads LQSTGSAEVITA. A helical transmembrane segment spans residues 150–168; the sequence is HYLFALGSYRALYIFNWIY. The Lumenal segment spans residues 169 to 178; it reads RYYTEDYFDP. A helical transmembrane segment spans residues 179 to 199; that stretch reads IVVVAGIVQTVLYADFFYLYV. Over 200-213 the chain is Cytoplasmic; it reads TRVVQTRKGMELPI.

The protein belongs to the ERD2 family.

The protein localises to the endoplasmic reticulum membrane. Functionally, required for the retention of luminal endoplasmic reticulum proteins. Determines the specificity of the luminal ER protein retention system. Also required for normal vesicular traffic through the Golgi. This Caenorhabditis elegans protein is ER lumen protein-retaining receptor erd-2.2.